Reading from the N-terminus, the 473-residue chain is Ribosomal RNA small subunit methyltransferase F (473 aa).

S-adenosyl-L-methionine-binding positions include 124-130, glutamate 148, aspartate 175, and aspartate 193; that span reads ASAPGSK. Cysteine 246 functions as the Nucleophile in the catalytic mechanism.

Belongs to the class I-like SAM-binding methyltransferase superfamily. RsmB/NOP family.

The protein localises to the cytoplasm. It catalyses the reaction cytidine(1407) in 16S rRNA + S-adenosyl-L-methionine = 5-methylcytidine(1407) in 16S rRNA + S-adenosyl-L-homocysteine + H(+). In terms of biological role, specifically methylates the cytosine at position 1407 (m5C1407) of 16S rRNA. The polypeptide is Ribosomal RNA small subunit methyltransferase F (Aliivibrio salmonicida (strain LFI1238) (Vibrio salmonicida (strain LFI1238))).